A 215-amino-acid chain; its full sequence is Oligoribonuclease (215 aa).

The Exonuclease domain occupies 5–170 (LVWIDCEMTG…ADIHESIREL (166 aa)). The active site involves Tyr-127.

Belongs to the oligoribonuclease family.

The protein resides in the cytoplasm. Functionally, 3'-to-5' exoribonuclease specific for small oligoribonucleotides. The polypeptide is Oligoribonuclease (Mycobacterium leprae (strain TN)).